A 93-amino-acid chain; its full sequence is Large ribosomal subunit protein uL23 (93 aa).

The protein belongs to the universal ribosomal protein uL23 family. Part of the 50S ribosomal subunit. Contacts protein L29, and trigger factor when it is bound to the ribosome.

One of the early assembly proteins it binds 23S rRNA. One of the proteins that surrounds the polypeptide exit tunnel on the outside of the ribosome. Forms the main docking site for trigger factor binding to the ribosome. This is Large ribosomal subunit protein uL23 from Opitutus terrae (strain DSM 11246 / JCM 15787 / PB90-1).